A 316-amino-acid chain; its full sequence is Neuroguidin-B (316 aa).

Disordered stretches follow at residues 124 to 169 (ENDP…SKVK) and 292 to 316 (VPFM…RRRH). A compositionally biased stretch (acidic residues) spans 145–156 (DERESDSGEEGA). The span at 296–316 (KKSKKGPKKSKKKKGFSRRRH) shows a compositional bias: basic residues.

The protein belongs to the SAS10 family. Part of the small subunit (SSU) processome, composed of more than 70 proteins and the RNA chaperone small nucleolar RNA (snoRNA) U3.

Its subcellular location is the nucleus. The protein resides in the nucleolus. It localises to the chromosome. The protein localises to the centromere. It is found in the cytoplasm. Its subcellular location is the cell projection. The protein resides in the axon. It localises to the dendrite. The protein localises to the filopodium. Functionally, part of the small subunit (SSU) processome, first precursor of the small eukaryotic ribosomal subunit. During the assembly of the SSU processome in the nucleolus, many ribosome biogenesis factors, an RNA chaperone and ribosomal proteins associate with the nascent pre-rRNA and work in concert to generate RNA folding, modifications, rearrangements and cleavage as well as targeted degradation of pre-ribosomal RNA by the RNA exosome. Its dissociation from the complex determines the transition from state pre-A1 to state pre-A1*. May inhibit mRNA translation. The protein is Neuroguidin-B (ngdn-b) of Xenopus laevis (African clawed frog).